Here is a 432-residue protein sequence, read N- to C-terminus: uncharacterized protein (432 aa).

Positions 223-432 (ASAVRGEALF…KDLIEYLKTR (210 aa)) constitute a Cytochrome c domain. Positions 236, 239, and 240 each coordinate heme c.

This is an uncharacterized protein from Sinorhizobium fredii (strain NBRC 101917 / NGR234).